Consider the following 146-residue polypeptide: Large ribosomal subunit protein bL21 (146 aa).

Residues 117–146 (ITIGKSAPKSSSKKETVKKETKPKSEKSTN) form a disordered region. Residues 128-146 (SKKETVKKETKPKSEKSTN) show a composition bias toward basic and acidic residues.

This sequence belongs to the bacterial ribosomal protein bL21 family. Part of the 50S ribosomal subunit. Contacts protein L20.

Functionally, this protein binds to 23S rRNA in the presence of protein L20. This is Large ribosomal subunit protein bL21 from Prochlorococcus marinus (strain MIT 9301).